The primary structure comprises 244 residues: Sperm-egg fusion protein Juno (244 aa).

Residues 1 to 19 (MAQWWQILLGLWAVLPTLA) form the signal peptide. 8 disulfide bridges follow: Cys27/Cys55, Cys47/Cys95, Cys56/Cys99, Cys79/Cys166, Cys86/Cys137, Cys126/Cys200, Cys130/Cys180, and Cys143/Cys160. Residues 62 to 81 (WEAHLEEPLLFNFSMMHCGL) are important for interaction with IZUMO1. Residue Asn73 is glycosylated (N-linked (GlcNAc...) asparagine). Asn185 is a glycosylation site (N-linked (GlcNAc...) asparagine). A lipid anchor (GPI-anchor amidated glycine) is attached at Gly222. A propeptide spanning residues 223–244 (SALAPQLSYTLPAFSLCLLFHP) is cleaved from the precursor.

This sequence belongs to the folate receptor family. In terms of assembly, monomer. Interacts with IZUMO1; the interaction is direct. IZUMO1 and IZUMO1R/JUNO form a complex with 1:1 stoichiometry. Interacts with WDR54. Post-translationally, the protein is rapidly cleaved following fertilization, being only weakly detectable in zona-intact fertilized eggs at telophase II and undetectable at the pronuclear stage. Sheding is probably required to block to polyspermy and ensuring egg fusion with a single sperm. As to expression, widely expressed with higher expression in thymus, spleen and lung. Present at the cell surface of unfertilized oocytes, while it is barely detectable 30 to 40 minutes after fertilization (at protein level).

The protein localises to the cell membrane. Receptor for IZUMO1 present at the cell surface of oocytes (oolemma), which is essential for species-specific gamete recognition and fertilization. The IZUMO1:IZUMO1R/JUNO interaction is a necessary adhesion event between sperm and egg that is required for fertilization but is not sufficient for cell fusion. The ligand-receptor interaction probably does not act as a membrane 'fusogen'. Does not bind folate. The polypeptide is Sperm-egg fusion protein Juno (Mus musculus (Mouse)).